The primary structure comprises 119 residues: Phosphoribosyl-AMP cyclohydrolase (119 aa).

D77 serves as a coordination point for Mg(2+). C78 lines the Zn(2+) pocket. 2 residues coordinate Mg(2+): D79 and D81. Zn(2+) is bound by residues C94 and C101.

It belongs to the PRA-CH family. As to quaternary structure, homodimer. The cofactor is Mg(2+). Zn(2+) is required as a cofactor.

It localises to the cytoplasm. It carries out the reaction 1-(5-phospho-beta-D-ribosyl)-5'-AMP + H2O = 1-(5-phospho-beta-D-ribosyl)-5-[(5-phospho-beta-D-ribosylamino)methylideneamino]imidazole-4-carboxamide. Its pathway is amino-acid biosynthesis; L-histidine biosynthesis; L-histidine from 5-phospho-alpha-D-ribose 1-diphosphate: step 3/9. Its function is as follows. Catalyzes the hydrolysis of the adenine ring of phosphoribosyl-AMP. This is Phosphoribosyl-AMP cyclohydrolase from Cereibacter sphaeroides (strain KD131 / KCTC 12085) (Rhodobacter sphaeroides).